The following is a 252-amino-acid chain: Trypsin iota (252 aa).

The N-terminal stretch at 1–19 (MAVYGIVATVLVLLLLGDA) is a signal peptide. The propeptide at 20–27 (SDVEATGR) is activation peptide. A Peptidase S1 domain is found at 28 to 250 (IIGGSDQLIR…LRPWIVKAAN (223 aa)). Residues cysteine 53 and cysteine 69 are joined by a disulfide bond. Residues histidine 68 and aspartate 113 each act as charge relay system in the active site. Intrachain disulfides connect cysteine 175-cysteine 193 and cysteine 202-cysteine 226. The active-site Charge relay system is serine 206.

The protein belongs to the peptidase S1 family.

Its subcellular location is the secreted. It localises to the extracellular space. The enzyme catalyses Preferential cleavage: Arg-|-Xaa, Lys-|-Xaa.. The chain is Trypsin iota (iotaTry) from Drosophila melanogaster (Fruit fly).